The primary structure comprises 118 residues: Large ribosomal subunit protein bL19 (118 aa).

The protein belongs to the bacterial ribosomal protein bL19 family.

This protein is located at the 30S-50S ribosomal subunit interface and may play a role in the structure and function of the aminoacyl-tRNA binding site. This chain is Large ribosomal subunit protein bL19, found in Helicobacter pylori (strain P12).